The sequence spans 404 residues: Cysteine desulfurase IscS (404 aa).

Pyridoxal 5'-phosphate contacts are provided by residues 75 to 76 (AT), N155, Q183, and 203 to 205 (SAH). K206 bears the N6-(pyridoxal phosphate)lysine mark. T243 provides a ligand contact to pyridoxal 5'-phosphate. C328 functions as the Cysteine persulfide intermediate in the catalytic mechanism. C328 contributes to the [2Fe-2S] cluster binding site.

The protein belongs to the class-V pyridoxal-phosphate-dependent aminotransferase family. NifS/IscS subfamily. As to quaternary structure, homodimer. Forms a heterotetramer with IscU, interacts with other sulfur acceptors. Requires pyridoxal 5'-phosphate as cofactor.

It localises to the cytoplasm. It carries out the reaction (sulfur carrier)-H + L-cysteine = (sulfur carrier)-SH + L-alanine. It functions in the pathway cofactor biosynthesis; iron-sulfur cluster biosynthesis. In terms of biological role, master enzyme that delivers sulfur to a number of partners involved in Fe-S cluster assembly, tRNA modification or cofactor biosynthesis. Catalyzes the removal of elemental sulfur atoms from cysteine to produce alanine. Functions as a sulfur delivery protein for Fe-S cluster synthesis onto IscU, an Fe-S scaffold assembly protein, as well as other S acceptor proteins. This is Cysteine desulfurase IscS from Vibrio cholerae serotype O1 (strain ATCC 39541 / Classical Ogawa 395 / O395).